Consider the following 199-residue polypeptide: DnaJ homolog subfamily C member 5B (199 aa).

Phosphoserine occurs at positions 14 and 16. In terms of domain architecture, J spans 19–84 (ALYEILGLHK…SKRNIYDKYG (66 aa)).

In terms of assembly, interacts with the chaperone complex consisting of HSC70 and SGTA. Post-translationally, palmitoylated.

The protein resides in the membrane. This is DnaJ homolog subfamily C member 5B (DNAJC5B) from Sus scrofa (Pig).